The following is a 105-amino-acid chain: Cell division topological specificity factor (105 aa).

The protein belongs to the MinE family.

Prevents the cell division inhibition by proteins MinC and MinD at internal division sites while permitting inhibition at polar sites. This ensures cell division at the proper site by restricting the formation of a division septum at the midpoint of the long axis of the cell. The polypeptide is Cell division topological specificity factor (Prochlorococcus marinus (strain MIT 9515)).